The following is an 84-amino-acid chain: UPF0457 protein BT9727_2307 (84 aa).

It belongs to the UPF0457 family.

The protein is UPF0457 protein BT9727_2307 of Bacillus thuringiensis subsp. konkukian (strain 97-27).